The chain runs to 123 residues: Large ribosomal subunit protein bL19 (123 aa).

The protein belongs to the bacterial ribosomal protein bL19 family.

Its function is as follows. This protein is located at the 30S-50S ribosomal subunit interface and may play a role in the structure and function of the aminoacyl-tRNA binding site. This Acinetobacter baylyi (strain ATCC 33305 / BD413 / ADP1) protein is Large ribosomal subunit protein bL19.